The sequence spans 2963 residues: tRNA nuclease CdiA (2963 aa).

The signal sequence occupies residues 1–29 (MIPIYLRQKLISYALIYLVAIQPIMPVMA). The interval 35 to 320 (AQGSTALDKA…AQGNITLNSH (286 aa)) is two-partner system transport domain (TPS). An FHA-1 region spans residues 573 to 1074 (GNVVAQEHAQ…MVLNTASLLN (502 aa)). Residues 1075–1342 (RRDGFSVTEK…KPLTRAQLSD (268 aa)) are receptor binding domain (RBD). Residues 1343-1528 (YPLPDSNNGL…LAKAEQAHLQ (186 aa)) form a YP domain region. Residues 1529 to 1751 (GSVISGNKVE…ATLQAERDVN (223 aa)) are periplasmic FHA-1 repeat (pFR). Positions 1759–1770 (TRNQHIDSEDKT) are enriched in basic and acidic residues. Disordered regions lie at residues 1759–1787 (TRNQ…LTAS) and 1992–2012 (SKSS…SASA). An FHA-2 region spans residues 1762–2314 (QHIDSEDKTT…DSDNYNSIQK (553 aa)). Residues 1771 to 1782 (TGYTRSTLSSGG) show a composition bias toward polar residues. The VEDN CT cleavage motif signature appears at 2694–2697 (VEDN). A C-terminal effector domain (CT) region spans residues 2694–2963 (VEDNNLSFGK…TGRVRNFHPN (270 aa)).

It in the N-terminal section; belongs to the CdiA toxin family. This sequence in the C-terminal section; belongs to the bacterial EndoU family. Forms a 1:1 complex with cognate immunity protein CdiI.

It is found in the secreted. It localises to the target cell. The protein resides in the target cell cytoplasm. In terms of biological role, toxic component of a toxin-immunity protein module, which functions as a cellular contact-dependent growth inhibition (CDI) system. CDI modules allow bacteria to communicate with and inhibit the growth of closely related neighboring bacteria in a contact-dependent fashion. Targeting of the CT domain (residues 2824-2963) in the absence of immunity protein inhibits cell growth and causes tRNA(UUC-Glu) cleavage in the anticodon loop; expression of cognate immunity protein CdiI-43969 neutralizes growth inhibition and tRNA(UUC-Glu) remains intact, whereas non-cognate immunity proteins do not confer protection from the toxic effects. Functionally, the CdiA protein is thought to be exported from the cell through the central lumen of CdiB, the other half of its two-partner system (TPS). The TPS domain probably remains associated with CdiB while the FHA-1 domain forms an extended filament with the receptor-binding domain (RBD) at its extremity; in the secretion arrested state the C-terminus of the RBD and YP domains form a hairpin-like structure as the FHA-2, PT and CT domains are periplasmic. The YP domain is probably responsible for this arrest at the point where it re-enters the host cell periplasm. Upon binding to a target cell outer membrane receptor a signal is transmitted to activate secretion. The filament elongates slightly, the rest of CdiA is secreted and the FHA-2 domain becomes stably associated with the target cell's outer membrane where it facilitates entry of the toxic CT domain into the target cell periplasm. From there the toxic CT domain is cleaved and gains access to the target cell cytoplasm via an inner membrane protein. This Yersinia mollaretii (strain ATCC 43969 / DSM 18520 / CIP 103324 / CNY 7263 / WAIP 204) protein is tRNA nuclease CdiA.